The primary structure comprises 165 residues: Ubiquitin-conjugating enzyme E2 G2 (165 aa).

An N-acetylalanine modification is found at Ala-2. The region spanning 4 to 164 (TALKRLMAEY…AKQIVQKSLG (161 aa)) is the UBC core domain. Catalysis depends on Cys-89, which acts as the Glycyl thioester intermediate.

The protein belongs to the ubiquitin-conjugating enzyme family. In terms of assembly, interacts with AUP1 (via C-terminus); the interaction recruits UBE2G2 to lipid droplets. Interacts with ubiquitin ligases AMFR/gp78 and RNF139/TRC8; recruitment to lipid droplets by AUP1 facilitates interaction of UBE2G2 with AMFR and RNF139, leading to sterol-induced ubiquitination of 3-hydroxy-3-methylglutaryl coenzyme A reductase and its subsequent proteasomal degradation.

It is found in the endoplasmic reticulum. Its subcellular location is the lipid droplet. The enzyme catalyses S-ubiquitinyl-[E1 ubiquitin-activating enzyme]-L-cysteine + [E2 ubiquitin-conjugating enzyme]-L-cysteine = [E1 ubiquitin-activating enzyme]-L-cysteine + S-ubiquitinyl-[E2 ubiquitin-conjugating enzyme]-L-cysteine.. The protein operates within protein modification; protein ubiquitination. Its function is as follows. Accepts ubiquitin from the E1 complex and catalyzes its covalent attachment to other proteins. In vitro catalyzes 'Lys-48'-linked polyubiquitination. Involved in endoplasmic reticulum-associated degradation (ERAD). Required for sterol-induced ubiquitination of 3-hydroxy-3-methylglutaryl coenzyme A reductase and its subsequent proteasomal degradation. The protein is Ubiquitin-conjugating enzyme E2 G2 of Bos taurus (Bovine).